The primary structure comprises 609 residues: UvrABC system protein C (609 aa).

A GIY-YIG domain is found at S16 to V94. In terms of domain architecture, UVR spans Q203–V238.

The protein belongs to the UvrC family. As to quaternary structure, interacts with UvrB in an incision complex.

It is found in the cytoplasm. The UvrABC repair system catalyzes the recognition and processing of DNA lesions. UvrC both incises the 5' and 3' sides of the lesion. The N-terminal half is responsible for the 3' incision and the C-terminal half is responsible for the 5' incision. This Shewanella baltica (strain OS195) protein is UvrABC system protein C.